The following is an 82-amino-acid chain: Small ribosomal subunit protein bS18 (82 aa).

Residues 1–10 (MTDTNQNSSR) are compositionally biased toward polar residues. The interval 1-21 (MTDTNQNSSRRPFHRRRKTCP) is disordered.

This sequence belongs to the bacterial ribosomal protein bS18 family. In terms of assembly, part of the 30S ribosomal subunit. Forms a tight heterodimer with protein bS6.

Binds as a heterodimer with protein bS6 to the central domain of the 16S rRNA, where it helps stabilize the platform of the 30S subunit. In Bartonella tribocorum (strain CIP 105476 / IBS 506), this protein is Small ribosomal subunit protein bS18.